Consider the following 367-residue polypeptide: Biotin synthase (367 aa).

Positions 73 to 308 constitute a Radical SAM core domain; it reads CCGNTVDLCS…EQIIRYAGGR (236 aa). Residues Cys-91, Cys-95, and Cys-98 each coordinate [4Fe-4S] cluster. 4 residues coordinate [2Fe-2S] cluster: Cys-136, Cys-173, Cys-233, and Arg-303.

It belongs to the radical SAM superfamily. Biotin synthase family. As to quaternary structure, homodimer. [4Fe-4S] cluster serves as cofactor. Requires [2Fe-2S] cluster as cofactor.

It catalyses the reaction (4R,5S)-dethiobiotin + (sulfur carrier)-SH + 2 reduced [2Fe-2S]-[ferredoxin] + 2 S-adenosyl-L-methionine = (sulfur carrier)-H + biotin + 2 5'-deoxyadenosine + 2 L-methionine + 2 oxidized [2Fe-2S]-[ferredoxin]. It participates in cofactor biosynthesis; biotin biosynthesis; biotin from 7,8-diaminononanoate: step 2/2. Functionally, catalyzes the conversion of dethiobiotin (DTB) to biotin by the insertion of a sulfur atom into dethiobiotin via a radical-based mechanism. This is Biotin synthase from Picosynechococcus sp. (strain ATCC 27264 / PCC 7002 / PR-6) (Agmenellum quadruplicatum).